Consider the following 271-residue polypeptide: 5-deoxy-glucuronate isomerase (271 aa).

This sequence belongs to the isomerase IolB family.

It catalyses the reaction 5-deoxy-D-glucuronate = 5-dehydro-2-deoxy-D-gluconate. It participates in polyol metabolism; myo-inositol degradation into acetyl-CoA; acetyl-CoA from myo-inositol: step 4/7. Involved in the isomerization of 5-deoxy-glucuronate (5DG) to 5-dehydro-2-deoxy-D-gluconate (DKG or 2-deoxy-5-keto-D-gluconate). In Bacillus licheniformis (strain ATCC 14580 / DSM 13 / JCM 2505 / CCUG 7422 / NBRC 12200 / NCIMB 9375 / NCTC 10341 / NRRL NRS-1264 / Gibson 46), this protein is 5-deoxy-glucuronate isomerase.